Consider the following 160-residue polypeptide: Cytochrome b6-f complex subunit 4 (160 aa).

3 consecutive transmembrane segments (helical) span residues 36–56 (LLYMFPVVILGTFALSISLAV), 95–115 (LLGVLCMAAVPVGLITVPFIE), and 131–151 (TLFLFGTATAVWLGIGAALPI).

The protein belongs to the cytochrome b family. PetD subfamily. The 4 large subunits of the cytochrome b6-f complex are cytochrome b6, subunit IV (17 kDa polypeptide, petD), cytochrome f and the Rieske protein, while the 4 small subunits are petG, petL, petM and petN. The complex functions as a dimer.

It localises to the plastid. The protein localises to the chloroplast thylakoid membrane. Component of the cytochrome b6-f complex, which mediates electron transfer between photosystem II (PSII) and photosystem I (PSI), cyclic electron flow around PSI, and state transitions. In Oltmannsiellopsis viridis (Marine flagellate), this protein is Cytochrome b6-f complex subunit 4.